Consider the following 238-residue polypeptide: Pyridoxine 5'-phosphate synthase (238 aa).

Asn-7 contributes to the 3-amino-2-oxopropyl phosphate binding site. Residue 9–10 (DH) coordinates 1-deoxy-D-xylulose 5-phosphate. Arg-18 contacts 3-amino-2-oxopropyl phosphate. His-43 serves as the catalytic Proton acceptor. Positions 45 and 50 each coordinate 1-deoxy-D-xylulose 5-phosphate. The active-site Proton acceptor is Glu-70. Residue Thr-100 coordinates 1-deoxy-D-xylulose 5-phosphate. The active-site Proton donor is His-191. 3-amino-2-oxopropyl phosphate is bound by residues Gly-192 and 213–214 (GH).

Belongs to the PNP synthase family. Homooctamer; tetramer of dimers.

The protein localises to the cytoplasm. The catalysed reaction is 3-amino-2-oxopropyl phosphate + 1-deoxy-D-xylulose 5-phosphate = pyridoxine 5'-phosphate + phosphate + 2 H2O + H(+). Its pathway is cofactor biosynthesis; pyridoxine 5'-phosphate biosynthesis; pyridoxine 5'-phosphate from D-erythrose 4-phosphate: step 5/5. Its function is as follows. Catalyzes the complicated ring closure reaction between the two acyclic compounds 1-deoxy-D-xylulose-5-phosphate (DXP) and 3-amino-2-oxopropyl phosphate (1-amino-acetone-3-phosphate or AAP) to form pyridoxine 5'-phosphate (PNP) and inorganic phosphate. This Thermosynechococcus vestitus (strain NIES-2133 / IAM M-273 / BP-1) protein is Pyridoxine 5'-phosphate synthase.